The sequence spans 510 residues: Anaerobic nitric oxide reductase transcription regulator NorR (510 aa).

Positions isoleucine 188–valine 417 constitute a Sigma-54 factor interaction domain. ATP contacts are provided by residues glycine 216 to glutamate 223 and alanine 279 to glutamate 288. The H-T-H motif DNA-binding region spans tryptophan 486 to lysine 505.

It functions in the pathway nitrogen metabolism; nitric oxide reduction. Functionally, required for the expression of anaerobic nitric oxide (NO) reductase, acts as a transcriptional activator for at least the norVW operon. Activation also requires sigma-54. This chain is Anaerobic nitric oxide reductase transcription regulator NorR, found in Vibrio vulnificus (strain CMCP6).